A 738-amino-acid polypeptide reads, in one-letter code: Dipeptidyl peptidase 3 (738 aa).

Ala2 is subject to N-acetylalanine. His450 serves as a coordination point for Zn(2+). The active site involves Glu451. Residues His455 and Glu508 each contribute to the Zn(2+) site.

The protein belongs to the peptidase M49 family. Zn(2+) is required as a cofactor.

It localises to the cytoplasm. The catalysed reaction is Release of an N-terminal dipeptide from a peptide comprising four or more residues, with broad specificity. Also acts on dipeptidyl 2-naphthylamides.. Inhibited by spinorphin, an opioid peptide derived from hemoglobin. In terms of biological role, cleaves and degrades bioactive peptides, including angiotensin, Leu-enkephalin and Met-enkephalin. Also cleaves Arg-Arg-beta-naphthylamide. In Rattus norvegicus (Rat), this protein is Dipeptidyl peptidase 3 (Dpp3).